Reading from the N-terminus, the 116-residue chain is Iron-sulfur cluster insertion protein ErpA (116 aa).

C44, C108, and C110 together coordinate iron-sulfur cluster.

This sequence belongs to the HesB/IscA family. As to quaternary structure, homodimer. Iron-sulfur cluster is required as a cofactor.

Its function is as follows. Required for insertion of 4Fe-4S clusters for at least IspG. In Shewanella putrefaciens (strain CN-32 / ATCC BAA-453), this protein is Iron-sulfur cluster insertion protein ErpA.